A 229-amino-acid chain; its full sequence is UPF0758 protein Caur_3603 (229 aa).

One can recognise an MPN domain in the interval 105 to 227 (PIRSPADVAT…YVSLRERGLG (123 aa)). 3 residues coordinate Zn(2+): H176, H178, and D189. A JAMM motif motif is present at residues 176–189 (HNHPSGEPTPSMED).

This sequence belongs to the UPF0758 family.

The protein is UPF0758 protein Caur_3603 of Chloroflexus aurantiacus (strain ATCC 29366 / DSM 635 / J-10-fl).